The following is a 186-amino-acid chain: Shikimate kinase (186 aa).

21-26 (GVGKTT) lines the ATP pocket. Thr25 lines the Mg(2+) pocket. 3 residues coordinate substrate: Asp43, Arg67, and Gly90. Arg129 provides a ligand contact to ATP. Arg147 is a binding site for substrate.

This sequence belongs to the shikimate kinase family. As to quaternary structure, monomer. Mg(2+) serves as cofactor.

The protein localises to the cytoplasm. It carries out the reaction shikimate + ATP = 3-phosphoshikimate + ADP + H(+). It participates in metabolic intermediate biosynthesis; chorismate biosynthesis; chorismate from D-erythrose 4-phosphate and phosphoenolpyruvate: step 5/7. Functionally, catalyzes the specific phosphorylation of the 3-hydroxyl group of shikimic acid using ATP as a cosubstrate. The protein is Shikimate kinase of Bacillus subtilis (strain 168).